The following is a 112-amino-acid chain: Protein lin-52 homolog (112 aa).

This sequence belongs to the lin-52 family. Component of the DREAM complex.

This chain is Protein lin-52 homolog (lin52), found in Tetraodon nigroviridis (Spotted green pufferfish).